A 577-amino-acid chain; its full sequence is DNA-directed RNA polymerase subunit alpha (577 aa).

Positions 1-461 (MIKIIIKETF…QLFLPLQQIR (461 aa)) are alpha N-terminal domain (alpha-NTD). The interval 510-577 (FDHRLLELDI…ALQLMKLTLK (68 aa)) is alpha C-terminal domain (alpha-CTD).

It belongs to the RNA polymerase alpha chain family. In terms of assembly, in plastids the minimal PEP RNA polymerase catalytic core is composed of four subunits: alpha, beta, beta', and beta''. When a (nuclear-encoded) sigma factor is associated with the core the holoenzyme is formed, which can initiate transcription.

Its subcellular location is the plastid. The protein localises to the chloroplast. It carries out the reaction RNA(n) + a ribonucleoside 5'-triphosphate = RNA(n+1) + diphosphate. Functionally, DNA-dependent RNA polymerase catalyzes the transcription of DNA into RNA using the four ribonucleoside triphosphates as substrates. This Tupiella akineta (Green alga) protein is DNA-directed RNA polymerase subunit alpha.